A 365-amino-acid polypeptide reads, in one-letter code: Class I histocompatibility antigen, Gogo-A*0201 alpha chain (365 aa).

The N-terminal stretch at methionine 1–alanine 24 is a signal peptide. Positions glycine 25 to alanine 114 are alpha-1. The Extracellular portion of the chain corresponds to glycine 25–isoleucine 308. The N-linked (GlcNAc...) asparagine glycan is linked to asparagine 110. Positions glycine 115–threonine 206 are alpha-2. Disulfide bonds link cysteine 125–cysteine 188 and cysteine 227–cysteine 283. The alpha-3 stretch occupies residues aspartate 207–tryptophan 298. Residues proline 209–threonine 295 form the Ig-like C1-type domain. A connecting peptide region spans residues glutamate 299–isoleucine 308. A helical membrane pass occupies residues valine 309–tryptophan 332. Residues arginine 333–valine 365 are Cytoplasmic-facing. Positions aspartate 338–valine 365 are disordered. Residues glycine 342–serine 359 are compositionally biased toward low complexity. Serine 343 is modified (phosphoserine). Residue tyrosine 344 is modified to Phosphotyrosine. Serine 345, serine 349, serine 350, serine 352, serine 356, and serine 359 each carry phosphoserine.

It belongs to the MHC class I family. In terms of assembly, heterodimer of an alpha chain and a beta chain (beta-2-microglobulin).

The protein localises to the membrane. Involved in the presentation of foreign antigens to the immune system. The sequence is that of Class I histocompatibility antigen, Gogo-A*0201 alpha chain from Gorilla gorilla gorilla (Western lowland gorilla).